The following is a 92-amino-acid chain: Cell division topological specificity factor (92 aa).

It belongs to the MinE family.

In terms of biological role, prevents the cell division inhibition by proteins MinC and MinD at internal division sites while permitting inhibition at polar sites. This ensures cell division at the proper site by restricting the formation of a division septum at the midpoint of the long axis of the cell. The chain is Cell division topological specificity factor from Syntrophobacter fumaroxidans (strain DSM 10017 / MPOB).